Reading from the N-terminus, the 256-residue chain is uncharacterized protein (256 aa).

This is an uncharacterized protein from Pasteurella multocida (strain Pm70).